Consider the following 196-residue polypeptide: Probable malonic semialdehyde reductase RutE (196 aa).

Belongs to the nitroreductase family. HadB/RutE subfamily. Requires FMN as cofactor.

It carries out the reaction 3-hydroxypropanoate + NADP(+) = 3-oxopropanoate + NADPH + H(+). Functionally, may reduce toxic product malonic semialdehyde to 3-hydroxypropionic acid, which is excreted. This chain is Probable malonic semialdehyde reductase RutE, found in Escherichia coli O6:H1 (strain CFT073 / ATCC 700928 / UPEC).